A 493-amino-acid polypeptide reads, in one-letter code: Phenmedipham hydrolase (493 aa).

S188 functions as the Acyl-ester intermediate in the catalytic mechanism. Active-site charge relay system residues include E307 and H402.

This sequence belongs to the type-B carboxylesterase/lipase family. In terms of assembly, monomer.

Its function is as follows. May degrade the phenylcarbamate herbicides phenmedipham and desmedipham cometabolically by hydrolyzing their central carbamate linkages. Conveys resistance to the herbicide phenmedipham. This is Phenmedipham hydrolase (pcd) from Pseudarthrobacter oxydans (Arthrobacter oxydans).